The primary structure comprises 428 residues: Tyrosine--tRNA ligase (428 aa).

Residue Tyr-36 participates in L-tyrosine binding. The 'HIGH' region signature appears at 41–50; the sequence is PTARSLHIGS. The L-tyrosine site is built by Tyr-169 and Gln-173. A 'KMSKS' region motif is present at residues 229 to 233; sequence KMGKT. Residue Lys-232 participates in ATP binding. Residues 361–427 enclose the S4 RNA-binding domain; that stretch reads IPAYEIMHEC…GKKKYMIIKV (67 aa).

The protein belongs to the class-I aminoacyl-tRNA synthetase family. TyrS type 1 subfamily. In terms of assembly, homodimer.

It localises to the cytoplasm. The catalysed reaction is tRNA(Tyr) + L-tyrosine + ATP = L-tyrosyl-tRNA(Tyr) + AMP + diphosphate + H(+). Catalyzes the attachment of tyrosine to tRNA(Tyr) in a two-step reaction: tyrosine is first activated by ATP to form Tyr-AMP and then transferred to the acceptor end of tRNA(Tyr). This chain is Tyrosine--tRNA ligase, found in Syntrophus aciditrophicus (strain SB).